Consider the following 1526-residue polypeptide: DNA topoisomerase 2-alpha (1526 aa).

An N-acetylmethionine modification is found at M1. The disordered stretch occupies residues 1 to 21 (MELSPLQPVNENMQMNKKKNE). Position 4 is a phosphoserine (S4). Residue K17 forms a Glycyl lysine isopeptide (Lys-Gly) (interchain with G-Cter in SUMO2) linkage. Residues N90, N119, and 147-149 (SSN) contribute to the ATP site. Glycyl lysine isopeptide (Lys-Gly) (interchain with G-Cter in SUMO2) cross-links involve residues K155 and K156. ATP is bound at residue 160 to 167 (GRNGYGAK). K260 is covalently cross-linked (Glycyl lysine isopeptide (Lys-Gly) (interchain with G-Cter in SUMO2)). Residue T281 is modified to Phosphothreonine. Residues 341 to 343 (KKK) form an interaction with DNA region. A Glycyl lysine isopeptide (Lys-Gly) (interchain with G-Cter in SUMO2) cross-link involves residue K351. 375-377 (QTK) serves as a coordination point for ATP. Residues K385, K396, K415, K417, K424, and K439 each participate in a glycyl lysine isopeptide (Lys-Gly) (interchain with G-Cter in SUMO2) cross-link. The 118-residue stretch at 454-571 (CTLILTEGDS…SLLRHRFLEE (118 aa)) folds into the Toprim domain. E460 lines the Mg(2+) pocket. Glycyl lysine isopeptide (Lys-Gly) (interchain with G-Cter in SUMO2) cross-links involve residues K465, K479, and K528. Positions 540 and 542 each coordinate Mg(2+). Glycyl lysine isopeptide (Lys-Gly) (interchain with G-Cter in SUMO2) cross-links involve residues K583, K598, K613, K621, K624, K631, K638, K654, K661, and K675. One can recognise a Topo IIA-type catalytic domain in the interval 714 to 1166 (IPSMVDGLKP…SPSDLWKEDL (453 aa)). Y804 acts as the O-(5'-phospho-DNA)-tyrosine intermediate in catalysis. Residues 989–998 (KLQTSLTCNS) form an interaction with DNA region. K1074 participates in a covalent cross-link: Glycyl lysine isopeptide (Lys-Gly) (interchain with G-Cter in SUMO2). Disordered regions lie at residues 1089 to 1117 (WKEAQQKVPDEEENEESDNENSDSVAESG) and 1180 to 1217 (EKQDEQVGLPGKGGKAKGKKAQMSEVLPSPHGKRVIPQ). A compositionally biased stretch (acidic residues) spans 1098-1109 (DEEENEESDNEN). A Phosphoserine; by CK1 modification is found at S1105. Residues K1191 and K1199 each participate in a glycyl lysine isopeptide (Lys-Gly) (interchain with G-Cter in SUMO2) cross-link. S1208 is subject to Phosphoserine. K1223 is covalently cross-linked (Glycyl lysine isopeptide (Lys-Gly) (interchain with G-Cter in SUMO2)). Residues 1233–1526 (KIKSENVEGT…LEESDDDDLF (294 aa)) form a disordered region. A Glycyl lysine isopeptide (Lys-Gly) (interchain with G-Cter in SUMO1); alternate cross-link involves residue K1235. A Glycyl lysine isopeptide (Lys-Gly) (interchain with G-Cter in SUMO2); alternate cross-link involves residue K1235. At T1242 the chain carries Phosphothreonine. K1254 participates in a covalent cross-link: Glycyl lysine isopeptide (Lys-Gly) (interchain with G-Cter in SUMO2). Residues 1255–1265 (QRIEKKQKKEP) are compositionally biased toward basic and acidic residues. Glycyl lysine isopeptide (Lys-Gly) (interchain with G-Cter in SUMO2) cross-links involve residues K1271, K1278, and K1281. Phosphoserine is present on residues S1290, S1292, S1294, and S1297. The residue at position 1322 (T1322) is a Phosphothreonine. The segment covering 1325–1344 (LDSDEDFSGSDGKDEDEDFF) has biased composition (acidic residues). S1327 and S1332 each carry phosphoserine. T1349 is subject to Phosphothreonine. Glycyl lysine isopeptide (Lys-Gly) (interchain with G-Cter in SUMO2) cross-links involve residues K1358, K1362, and K1368. Phosphoserine occurs at positions 1369 and 1372. K1380 is covalently cross-linked (Glycyl lysine isopeptide (Lys-Gly) (interchain with G-Cter in SUMO2)). S1382 and S1386 each carry phosphoserine. The segment covering 1405-1426 (SKQTVAVKKTATKSQSSTSTAG) has biased composition (low complexity). K1417 participates in a covalent cross-link: Glycyl lysine isopeptide (Lys-Gly) (interchain with G-Cter in SUMO2); alternate. An N6-acetyllysine; alternate modification is found at K1417. Residues 1428–1434 (KKRAVPK) form an interaction with PLSCR1 region. Residue K1437 forms a Glycyl lysine isopeptide (Lys-Gly) (interchain with G-Cter in SUMO2); alternate linkage. At K1437 the chain carries N6-acetyllysine; alternate. Residues K1449 and K1454 each participate in a glycyl lysine isopeptide (Lys-Gly) (interchain with G-Cter in SUMO2) cross-link. Phosphoserine is present on residues S1464, S1466, S1469, and S1471. Glycyl lysine isopeptide (Lys-Gly) (interchain with G-Cter in SUMO2) cross-links involve residues K1479 and K1487. Basic and acidic residues predominate over residues 1486 to 1497 (SKGENQDFRVDL). Position 1520 is a phosphoserine (S1520).

This sequence belongs to the type II topoisomerase family. Homodimer. Interacts with COPS5. Interacts with RECQL5; this stimulates DNA decatenation. Interacts with SETMAR; stimulates the topoisomerase activity. Interacts with DHX9; this interaction occurs in a E2 enzyme UBE2I- and RNA-dependent manner, negatively regulates DHX9-mediated double-stranded DNA and RNA duplex helicase activity and stimulates TOP2A-mediated supercoiled DNA relaxation activity. Interacts with HNRNPU (via C-terminus); this interaction protects the topoisomerase TOP2A from degradation and positively regulates the relaxation of supercoiled DNA in a RNA-dependent manner. Interacts with MCM3AP. Interacts with ERCC6. Interacts with PLSCR1. Interacts with GCNA; this interaction allows the resolution of topoisomerase II (TOP2A) DNA-protein cross-links. Interacts with POL1RA/RPA1 (via dock II) and UBTF in the context of Pol I complex; may assist Pol I transcription initiation by releasing supercoils occurring during DNA unwinding. Interacts with TPRN; TPRN interacts with a number of DNA damage response proteins, is recruited to sites of DNA damage and may play a role in DNA damage repair. Mg(2+) is required as a cofactor. Requires Mn(2+) as cofactor. Ca(2+) serves as cofactor. Phosphorylation has no effect on catalytic activity. However, phosphorylation at Ser-1105 by CSNK1D/CK1 promotes DNA cleavable complex formation.

Its subcellular location is the cytoplasm. It is found in the nucleus. The protein resides in the nucleoplasm. It localises to the nucleolus. It catalyses the reaction ATP-dependent breakage, passage and rejoining of double-stranded DNA.. Functionally, key decatenating enzyme that alters DNA topology by binding to two double-stranded DNA molecules, generating a double-stranded break in one of the strands, passing the intact strand through the broken strand, and religating the broken strand. May play a role in regulating the period length of BMAL1 transcriptional oscillation. This Cricetulus griseus (Chinese hamster) protein is DNA topoisomerase 2-alpha (TOP2A).